A 177-amino-acid chain; its full sequence is Nucleoside-triphosphatase THEP1 (177 aa).

ATP-binding positions include 10-17 (GKPGIGKT) and 101-108 (CLVIDEIG).

It belongs to the THEP1 NTPase family.

The enzyme catalyses a ribonucleoside 5'-triphosphate + H2O = a ribonucleoside 5'-diphosphate + phosphate + H(+). Its function is as follows. Has nucleotide phosphatase activity towards ATP, GTP, CTP, TTP and UTP. May hydrolyze nucleoside diphosphates with lower efficiency. The polypeptide is Nucleoside-triphosphatase THEP1 (Natranaerobius thermophilus (strain ATCC BAA-1301 / DSM 18059 / JW/NM-WN-LF)).